The primary structure comprises 80 residues: Small ribosomal subunit protein uS17 (80 aa).

Belongs to the universal ribosomal protein uS17 family. As to quaternary structure, part of the 30S ribosomal subunit.

Its function is as follows. One of the primary rRNA binding proteins, it binds specifically to the 5'-end of 16S ribosomal RNA. The protein is Small ribosomal subunit protein uS17 of Chelativorans sp. (strain BNC1).